The following is a 456-amino-acid chain: uncharacterized protein (456 aa).

One can recognise a YrdC-like domain in the interval 277–440; sequence IKNTKTIKQL…TKQLVRTTAK (164 aa).

This is an uncharacterized protein from Mycoplasma genitalium (strain ATCC 33530 / DSM 19775 / NCTC 10195 / G37) (Mycoplasmoides genitalium).